The chain runs to 255 residues: Enolase-phosphatase E1 (255 aa).

Positions 22 and 24 each coordinate Mg(2+). Residues Ser-136–Ser-137 and Lys-173 each bind substrate. A Mg(2+)-binding site is contributed by Asp-199.

It belongs to the HAD-like hydrolase superfamily. MasA/MtnC family. In terms of assembly, monomer. Mg(2+) serves as cofactor.

It localises to the cytoplasm. Its subcellular location is the nucleus. It catalyses the reaction 5-methylsulfanyl-2,3-dioxopentyl phosphate + H2O = 1,2-dihydroxy-5-(methylsulfanyl)pent-1-en-3-one + phosphate. It functions in the pathway amino-acid biosynthesis; L-methionine biosynthesis via salvage pathway; L-methionine from S-methyl-5-thio-alpha-D-ribose 1-phosphate: step 3/6. It participates in amino-acid biosynthesis; L-methionine biosynthesis via salvage pathway; L-methionine from S-methyl-5-thio-alpha-D-ribose 1-phosphate: step 4/6. Its function is as follows. Bifunctional enzyme that catalyzes the enolization of 2,3-diketo-5-methylthiopentyl-1-phosphate (DK-MTP-1-P) into the intermediate 2-hydroxy-3-keto-5-methylthiopentenyl-1-phosphate (HK-MTPenyl-1-P), which is then dephosphorylated to form the acireductone 1,2-dihydroxy-3-keto-5-methylthiopentene (DHK-MTPene). The polypeptide is Enolase-phosphatase E1 (Verticillium alfalfae (strain VaMs.102 / ATCC MYA-4576 / FGSC 10136) (Verticillium wilt of alfalfa)).